We begin with the raw amino-acid sequence, 943 residues long: MSQDYKTTLNLPATEFPMRGDLPKREPGILARWEAQGLYQQLRDNAAGRPLFVLHDGPPYANGRIHLGHAVNKILKDIIVKSRYLAGFDAPYVPGWDCHGLPIEIAVEKKWGKVGTKLDAVEFRQKCREFAEEQINIQRVDFKRLGVTGDWDNPYKTLSFDFEANEIRALSKVVANGHLVRGAKPVYWCFDCGSALAEAEIEYQEKESPAIDVAYAARDAQAIGQAFGVSVPADVEVAVPIWTTTPWTLPASLAVSLGAEITYVLAEGPAHNGKRRWLVLAAALAERALQRYGVENLVLHGETTGAALENQLLAHPFYPEREILVLNGDHVSDEDGTGAVHTAPGHGQEDFVVSQKYGLLDKYNAGQVTPIDGRGVYLESTPPAGDVVLAGQHLWKAQEAIVGVLRDNGSLLAFHPIRHSYPHCWRHKTPVVFRATPQWFISMDKANLRNDALAAIDTVGWFPTWGKARIQSMVDGRPDWTISRQRTWGVPIALFTHRQTGEIHPRSVELMQQVADRVEAEGIDVWYSLDATELLGAEAADYEKVTDILDVWFDSGVTHEGVLAARGFGKPADLYLEGSDQHRGWFQSSLLTGVAIDKRAPYKQCLTHGFTVDEHGRKMSKSLGNGIEPQDIMNKLGADILRLWIASADYSNEMSLSQEILKRNADAYRRLRNTARFLLGNLDGFDPAQHLRPLDQMVALDRWIVHRAWELQEKIKAAYDGYNMAEIVQLLLNFCSVDLGSLYLDVTKDRLYTMPTDSHGRRSAQSAMYHIAEAFTRWVAPILTFTADELWGYLPGEHAGHVLFTTWYDGLAPLPADAQLNATDFDQLLAVREQVAKVLEPMRANGAIGAALEAEITIAANEEQAAKWQPLADELRFLFISGDVQVRPATTDEVFVSAQPTTKAKCVRCWHHRADVGRNADHPELCGRCVSNVTGAGEVRSWF.

A 'HIGH' region motif is present at residues 59-69; it reads PYANGRIHLGH. Glu577 serves as a coordination point for L-isoleucyl-5'-AMP. The 'KMSKS' region signature appears at 618 to 622; sequence KMSKS. Residue Lys621 coordinates ATP. Residues Cys906, Cys909, Cys926, and Cys929 each coordinate Zn(2+).

This sequence belongs to the class-I aminoacyl-tRNA synthetase family. IleS type 1 subfamily. As to quaternary structure, monomer. The cofactor is Zn(2+).

It localises to the cytoplasm. The enzyme catalyses tRNA(Ile) + L-isoleucine + ATP = L-isoleucyl-tRNA(Ile) + AMP + diphosphate. Its function is as follows. Catalyzes the attachment of isoleucine to tRNA(Ile). As IleRS can inadvertently accommodate and process structurally similar amino acids such as valine, to avoid such errors it has two additional distinct tRNA(Ile)-dependent editing activities. One activity is designated as 'pretransfer' editing and involves the hydrolysis of activated Val-AMP. The other activity is designated 'posttransfer' editing and involves deacylation of mischarged Val-tRNA(Ile). The protein is Isoleucine--tRNA ligase of Stenotrophomonas maltophilia (strain K279a).